Here is a 360-residue protein sequence, read N- to C-terminus: 3-isopropylmalate dehydrogenase (360 aa).

An NAD(+)-binding site is contributed by 76–89; sequence GPKWDTIERDIRPE. Substrate-binding residues include R96, R106, R134, and D224. 3 residues coordinate Mg(2+): D224, D248, and D252. 282–294 is a binding site for NAD(+); it reads GSAPDIAGQGIAN.

This sequence belongs to the isocitrate and isopropylmalate dehydrogenases family. LeuB type 1 subfamily. As to quaternary structure, homodimer. It depends on Mg(2+) as a cofactor. Mn(2+) serves as cofactor.

The protein resides in the cytoplasm. The catalysed reaction is (2R,3S)-3-isopropylmalate + NAD(+) = 4-methyl-2-oxopentanoate + CO2 + NADH. It participates in amino-acid biosynthesis; L-leucine biosynthesis; L-leucine from 3-methyl-2-oxobutanoate: step 3/4. Catalyzes the oxidation of 3-carboxy-2-hydroxy-4-methylpentanoate (3-isopropylmalate) to 3-carboxy-4-methyl-2-oxopentanoate. The product decarboxylates to 4-methyl-2 oxopentanoate. This chain is 3-isopropylmalate dehydrogenase, found in Pseudomonas syringae pv. tomato (strain ATCC BAA-871 / DC3000).